The following is a 991-amino-acid chain: Translation initiation factor IF-2 (991 aa).

3 disordered regions span residues 53-85, 97-175, and 312-395; these read SHGTSGADRKKITLTKKSTSEIKQADASGKART, VKRD…EAAE, and GIKG…DRGG. Basic and acidic residues-rich tracts occupy residues 97 to 113 and 125 to 175; these read VKRDDPTGASSESHDSQ and ELQR…EAAE. Residues 323-338 show a composition bias toward low complexity; sequence AAGAPAPGAAPGAAAK. Positions 339 to 349 are enriched in basic and acidic residues; it reads PGEKKSVKSEK. Residues 491-658 enclose the tr-type G domain; sequence PRPPVVTVMG…QVLLQAEVLE (168 aa). Positions 500–507 are G1; sequence GHVDHGKT. GTP is bound at residue 500–507; the sequence is GHVDHGKT. The interval 525 to 529 is G2; it reads GITQH. Residues 546–549 are G3; sequence DTPG. GTP is bound by residues 546 to 550 and 600 to 603; these read DTPGH and NKID. The segment at 600–603 is G4; that stretch reads NKID. The G5 stretch occupies residues 636-638; the sequence is SAK.

This sequence belongs to the TRAFAC class translation factor GTPase superfamily. Classic translation factor GTPase family. IF-2 subfamily.

Its subcellular location is the cytoplasm. In terms of biological role, one of the essential components for the initiation of protein synthesis. Protects formylmethionyl-tRNA from spontaneous hydrolysis and promotes its binding to the 30S ribosomal subunits. Also involved in the hydrolysis of GTP during the formation of the 70S ribosomal complex. In Leptothrix cholodnii (strain ATCC 51168 / LMG 8142 / SP-6) (Leptothrix discophora (strain SP-6)), this protein is Translation initiation factor IF-2.